The sequence spans 161 residues: Large ribosomal subunit protein uL15 (161 aa).

A disordered region spans residues Met1 to Gly43. Residues Arg21 to Gly37 are compositionally biased toward gly residues.

This sequence belongs to the universal ribosomal protein uL15 family. As to quaternary structure, part of the 50S ribosomal subunit.

Binds to the 23S rRNA. The protein is Large ribosomal subunit protein uL15 of Nitrobacter hamburgensis (strain DSM 10229 / NCIMB 13809 / X14).